An 88-amino-acid chain; its full sequence is Small ribosomal subunit protein bS20 (88 aa).

The tract at residues 1–27 is disordered; that stretch reads MANSKSAKKRALQSEKRRQHNASRRSM.

This sequence belongs to the bacterial ribosomal protein bS20 family.

In terms of biological role, binds directly to 16S ribosomal RNA. The sequence is that of Small ribosomal subunit protein bS20 from Shewanella denitrificans (strain OS217 / ATCC BAA-1090 / DSM 15013).